The following is a 236-amino-acid chain: 2,3,4,5-tetrahydropyridine-2,6-dicarboxylate N-acetyltransferase (236 aa).

Belongs to the transferase hexapeptide repeat family. DapH subfamily.

The enzyme catalyses (S)-2,3,4,5-tetrahydrodipicolinate + acetyl-CoA + H2O = L-2-acetamido-6-oxoheptanedioate + CoA. The protein operates within amino-acid biosynthesis; L-lysine biosynthesis via DAP pathway; LL-2,6-diaminopimelate from (S)-tetrahydrodipicolinate (acetylase route): step 1/3. Catalyzes the transfer of an acetyl group from acetyl-CoA to tetrahydrodipicolinate. This chain is 2,3,4,5-tetrahydropyridine-2,6-dicarboxylate N-acetyltransferase, found in Geobacillus sp. (strain WCH70).